A 398-amino-acid polypeptide reads, in one-letter code: Succinate--CoA ligase [ADP-forming] subunit beta (398 aa).

An ATP-grasp domain is found at 9–237 (RDLFETHGVP…AGGLDILELK (229 aa)). ATP-binding positions include K45, 52–54 (GRG), A94, and E99. Mg(2+) contacts are provided by N191 and D205. Substrate is bound by residues N257 and 319-321 (GIT).

This sequence belongs to the succinate/malate CoA ligase beta subunit family. In terms of assembly, heterotetramer of two alpha and two beta subunits. The cofactor is Mg(2+).

It carries out the reaction succinate + ATP + CoA = succinyl-CoA + ADP + phosphate. The enzyme catalyses GTP + succinate + CoA = succinyl-CoA + GDP + phosphate. Its pathway is carbohydrate metabolism; tricarboxylic acid cycle; succinate from succinyl-CoA (ligase route): step 1/1. Its function is as follows. Succinyl-CoA synthetase functions in the citric acid cycle (TCA), coupling the hydrolysis of succinyl-CoA to the synthesis of either ATP or GTP and thus represents the only step of substrate-level phosphorylation in the TCA. The beta subunit provides nucleotide specificity of the enzyme and binds the substrate succinate, while the binding sites for coenzyme A and phosphate are found in the alpha subunit. This Corynebacterium glutamicum (strain ATCC 13032 / DSM 20300 / JCM 1318 / BCRC 11384 / CCUG 27702 / LMG 3730 / NBRC 12168 / NCIMB 10025 / NRRL B-2784 / 534) protein is Succinate--CoA ligase [ADP-forming] subunit beta.